An 85-amino-acid chain; its full sequence is Large ribosomal subunit protein bL31 (85 aa).

The segment at Lys-64 to Lys-85 is disordered.

The protein belongs to the bacterial ribosomal protein bL31 family. Type A subfamily. Part of the 50S ribosomal subunit.

Its function is as follows. Binds the 23S rRNA. This is Large ribosomal subunit protein bL31 from Acaryochloris marina (strain MBIC 11017).